The sequence spans 324 residues: Signal peptidase I (324 aa).

A Blocked amino end (Met) modification is found at methionine 1. Residues 1–3 lie on the Periplasmic side of the membrane; the sequence is MAN. Residues 4–22 form a helical membrane-spanning segment; sequence MFALILVIATLVTGILWCV. At 23-58 the chain is on the cytoplasmic side; that stretch reads DKFFFAPKRRERQAAAQAAAGDSLDKATLKKVAPKP. Residues 59 to 77 traverse the membrane as a helical segment; it reads GWLETGASVFPVLAIVLIV. Over 78 to 324 the chain is Periplasmic; the sequence is RSFIYEPFQI…LRLSRIGGIH (247 aa). Catalysis depends on residues serine 91 and lysine 146. Cysteine 171 and cysteine 177 are joined by a disulfide.

This sequence belongs to the peptidase S26 family.

Its subcellular location is the cell inner membrane. It catalyses the reaction Cleavage of hydrophobic, N-terminal signal or leader sequences from secreted and periplasmic proteins.. This is Signal peptidase I (lepB) from Escherichia coli (strain K12).